A 442-amino-acid chain; its full sequence is UDP-N-acetylmuramate--L-alanine ligase (442 aa).

ATP is bound at residue 110 to 116; that stretch reads GAHGKTS.

This sequence belongs to the MurCDEF family.

It localises to the cytoplasm. The catalysed reaction is UDP-N-acetyl-alpha-D-muramate + L-alanine + ATP = UDP-N-acetyl-alpha-D-muramoyl-L-alanine + ADP + phosphate + H(+). It functions in the pathway cell wall biogenesis; peptidoglycan biosynthesis. In terms of biological role, cell wall formation. The protein is UDP-N-acetylmuramate--L-alanine ligase of Streptococcus thermophilus (strain ATCC BAA-491 / LMD-9).